A 126-amino-acid polypeptide reads, in one-letter code: uncharacterized protein (126 aa).

Positions 1-23 (MLKKLIMGFFLLILLGIAGVAVM) are cleaved as a signal peptide.

This is an uncharacterized protein from Archaeoglobus fulgidus (strain ATCC 49558 / DSM 4304 / JCM 9628 / NBRC 100126 / VC-16).